Here is a 250-residue protein sequence, read N- to C-terminus: AA9 family lytic polysaccharide monooxygenase AA17 (250 aa).

An N-terminal signal peptide occupies residues 1-21; it reads MAMSKIVSLTGLLASASLVAG. H22 and H107 together coordinate Cu(2+). 2 cysteine pairs are disulfide-bonded: C77–C199 and C118–C122. An N-linked (GlcNAc...) asparagine glycan is attached at N159. O2 contacts are provided by H185 and Q194. Cu(2+) is bound at residue Y196.

This sequence belongs to the polysaccharide monooxygenase AA9 family. The cofactor is Cu(2+).

Its subcellular location is the secreted. Its function is as follows. Lytic polysaccharide monooxygenase (LPMO) that exhibits oxidative cleavage beta-O-4 linkage of lignin resulting in the formation of aromatic compound guaiacol. Catalysis by LPMOs requires the reduction of the active-site copper from Cu(II) to Cu(I) by a reducing agent and H(2)O(2) or O(2) as a cosubstrate. Does not use cellulose, cello-oligosaccharides, xyloglucan, xylan, chitin nor starch as substrates. Able to depolymerize the lignin dimer guaicyl glycerol beta-guaicyl ether (GGE). This Aspergillus oryzae (strain ATCC 42149 / RIB 40) (Yellow koji mold) protein is AA9 family lytic polysaccharide monooxygenase AA17.